Reading from the N-terminus, the 878-residue chain is DNA mismatch repair protein MutS (878 aa).

630 to 637 (GPNMAGKS) contacts ATP.

The protein belongs to the DNA mismatch repair MutS family.

In terms of biological role, this protein is involved in the repair of mismatches in DNA. It is possible that it carries out the mismatch recognition step. This protein has a weak ATPase activity. This is DNA mismatch repair protein MutS from Chlorobaculum tepidum (strain ATCC 49652 / DSM 12025 / NBRC 103806 / TLS) (Chlorobium tepidum).